The following is a 396-amino-acid chain: NADH-quinone oxidoreductase subunit D (396 aa).

It belongs to the complex I 49 kDa subunit family. NDH-1 is composed of 14 different subunits. Subunits NuoB, C, D, E, F, and G constitute the peripheral sector of the complex.

It localises to the cell inner membrane. It catalyses the reaction a quinone + NADH + 5 H(+)(in) = a quinol + NAD(+) + 4 H(+)(out). NDH-1 shuttles electrons from NADH, via FMN and iron-sulfur (Fe-S) centers, to quinones in the respiratory chain. The immediate electron acceptor for the enzyme in this species is believed to be ubiquinone. Couples the redox reaction to proton translocation (for every two electrons transferred, four hydrogen ions are translocated across the cytoplasmic membrane), and thus conserves the redox energy in a proton gradient. This is NADH-quinone oxidoreductase subunit D from Methylobacterium sp. (strain 4-46).